The following is a 192-amino-acid chain: dCTP deaminase, dUMP-forming (192 aa).

DCTP is bound by residues 101–106 (KSSLGR), Asp119, 127–129 (TLE), Gln148, Tyr162, and Gln174. Glu129 functions as the Proton donor/acceptor in the catalytic mechanism. Residues 171–192 (YQGQRGPTPSRSWQSWHTWPTR) form a disordered region.

It belongs to the dCTP deaminase family. As to quaternary structure, homotrimer.

It carries out the reaction dCTP + 2 H2O = dUMP + NH4(+) + diphosphate. It participates in pyrimidine metabolism; dUMP biosynthesis; dUMP from dCTP: step 1/1. Functionally, bifunctional enzyme that catalyzes both the deamination of dCTP to dUTP and the hydrolysis of dUTP to dUMP without releasing the toxic dUTP intermediate. The protein is dCTP deaminase, dUMP-forming of Salinispora arenicola (strain CNS-205).